We begin with the raw amino-acid sequence, 493 residues long: Chaperone SurA (493 aa).

An N-terminal signal peptide occupies residues 1-33 (MKRQAFSLLSRLNPWQQLLLSAVLVTLAAPAAA). The tract at residues 46-76 (FTQQGSQSASQGSTVAPSQPMMGVPQPSSQP) is disordered. Low complexity predominate over residues 48–58 (QQGSQSASQGS). 2 consecutive PpiC domains span residues 230-332 (PTEF…KLVS) and 346-444 (IAQT…QVEN).

It is found in the periplasm. It carries out the reaction [protein]-peptidylproline (omega=180) = [protein]-peptidylproline (omega=0). In terms of biological role, chaperone involved in the correct folding and assembly of outer membrane proteins. Recognizes specific patterns of aromatic residues and the orientation of their side chains, which are found more frequently in integral outer membrane proteins. May act in both early periplasmic and late outer membrane-associated steps of protein maturation. The chain is Chaperone SurA from Cupriavidus metallidurans (strain ATCC 43123 / DSM 2839 / NBRC 102507 / CH34) (Ralstonia metallidurans).